We begin with the raw amino-acid sequence, 271 residues long: MPELPEVEVISNFLLDKIKNKQISNVIVNNWNLRAPITKNIDDMLKGKVIRNIKRRGKYTIWNTDGSVAVIIHLGMSGKLIYADHDQMRNKHDHVVFLFSDNTSIIFNDPRRFGLVIVLNKEQETDFFSDFGIEPLTDEFSGDYLQELLKNKKVNIKSALMDNKSIVGVGNIYASESLFRARISPLRSAKNLTYRECEKLAAEIKNTLSDAIAAGGSTLKDYAQPSGSAGYFQNNFYVYGKVQKPCKICNNIITLIRQNGRSTYFCNACQN.

The Schiff-base intermediate with DNA role is filled by Pro-2. Glu-3 (proton donor) is an active-site residue. Lys-58 serves as the catalytic Proton donor; for beta-elimination activity. Positions 92, 111, and 152 each coordinate DNA. The FPG-type zinc finger occupies 237–271 (YVYGKVQKPCKICNNIITLIRQNGRSTYFCNACQN). Arg-261 (proton donor; for delta-elimination activity) is an active-site residue.

The protein belongs to the FPG family. As to quaternary structure, monomer. It depends on Zn(2+) as a cofactor.

The catalysed reaction is Hydrolysis of DNA containing ring-opened 7-methylguanine residues, releasing 2,6-diamino-4-hydroxy-5-(N-methyl)formamidopyrimidine.. It carries out the reaction 2'-deoxyribonucleotide-(2'-deoxyribose 5'-phosphate)-2'-deoxyribonucleotide-DNA = a 3'-end 2'-deoxyribonucleotide-(2,3-dehydro-2,3-deoxyribose 5'-phosphate)-DNA + a 5'-end 5'-phospho-2'-deoxyribonucleoside-DNA + H(+). In terms of biological role, involved in base excision repair of DNA damaged by oxidation or by mutagenic agents. Acts as a DNA glycosylase that recognizes and removes damaged bases. Has a preference for oxidized purines, such as 7,8-dihydro-8-oxoguanine (8-oxoG). Has AP (apurinic/apyrimidinic) lyase activity and introduces nicks in the DNA strand. Cleaves the DNA backbone by beta-delta elimination to generate a single-strand break at the site of the removed base with both 3'- and 5'-phosphates. The chain is Formamidopyrimidine-DNA glycosylase from Wolbachia pipientis wMel.